The chain runs to 256 residues: Small ribosomal subunit protein eS1 (256 aa).

Residue A2 is modified to N-acetylalanine; partial.

Belongs to the eukaryotic ribosomal protein eS1 family. As to quaternary structure, component of the small ribosomal subunit. Mature ribosomes consist of a small (40S) and a large (60S) subunit. The 40S subunit contains about 33 different proteins and 1 molecule of RNA (18S). The 60S subunit contains about 49 different proteins and 3 molecules of RNA (25S, 5.8S and 5S).

Its subcellular location is the cytoplasm. The chain is Small ribosomal subunit protein eS1 from Laccaria bicolor (strain S238N-H82 / ATCC MYA-4686) (Bicoloured deceiver).